The following is a 294-amino-acid chain: Gap junction delta-3 protein (294 aa).

Residues 1 to 24 are Cytoplasmic-facing; the sequence is MGEWAFLGSLLDAVQLQSPLVGRL. Residues 25-45 form a helical membrane-spanning segment; that stretch reads WLVVMLIFRILVLATVGGAVF. Residues 46 to 76 are Extracellular-facing; sequence EDEQEEFVCNTLQPGCRQTCYDRAFPVSHYR. Residues 77–97 form a helical membrane-spanning segment; it reads FWLFHILLLSAPPVLFVVYSM. Over 98 to 136 the chain is Cytoplasmic; the sequence is HRAGKEAGGAEAAAQCAPGLPEAQCAPCALRARRARRCY. Residues 137-157 traverse the membrane as a helical segment; the sequence is LLSVALRLLAELTFLGGQALL. At 158 to 188 the chain is on the extracellular side; the sequence is YGFRVAPHFACAGPPCPHTVDCFVSRPTEKT. A helical transmembrane segment spans residues 189 to 209; it reads VFVLFYFAVGLLSALLSVAEL. Residues 210–294 lie on the Cytoplasmic side of the membrane; sequence GHLLWKGRPR…PATGRRDLAI (85 aa). The segment at 233 to 294 is disordered; the sequence is EAQKLLPPPP…PATGRRDLAI (62 aa). Pro residues predominate over residues 238-250; it reads LPPPPPPPPPPAL.

The protein belongs to the connexin family. Delta-type subfamily. As to quaternary structure, a connexon is composed of a hexamer of connexins. Interacts with TJP1. In terms of tissue distribution, expressed in vascular smooth muscle cells. Found in heart, colon, and artery (at protein level). Found in cerebral cortex, heart, liver, lung, kidney, spleen and testis.

It localises to the cell membrane. Its subcellular location is the cell junction. It is found in the gap junction. Functionally, one gap junction consists of a cluster of closely packed pairs of transmembrane channels, the connexons, through which materials of low MW diffuse from one cell to a neighboring cell. In Homo sapiens (Human), this protein is Gap junction delta-3 protein (GJD3).